The chain runs to 520 residues: Flavin-dependent halogenase radH (520 aa).

Residues G14, A17, and E47 each coordinate FAD. Chloride is bound by residues S330 and G331.

The protein belongs to the flavin-dependent halogenase family.

Its pathway is secondary metabolite biosynthesis. Its function is as follows. Non-heme halogenase; part of the gene cluster that mediates the biosynthesis of radicicol, a resorcylic acid lactone (RAL) that irreversibly inhibits the HSP90 molecular chaperone, an important target for cancer chemotherapy. The cluster encodes only two apparent post-PKS enzymes, a cytochrome P450 monooxygenase (radP) and a non-heme halogenase (radH) that introduce the epoxide and the chlorine, respectively. If this cluster includes all the genes required for radicicol biosynthesis, the remaining structural features of radicicol are presumably generated by the PKSs rads1 and rads2. The C-2' ketone could arise if the R-PKS rads1 and NR-PKS rads2 each carry out four iterations, in contrast to the five iteration-three iteration split for the hypothemycin PKSs. The origin of the cis 5',6' double bond is not known. The radicicol R-PKS rads1 ER domain may catalyze either double bond isomerization or reduction in the third iteration. The polypeptide is Flavin-dependent halogenase radH (Floropilus chiversii (Chaetomium chiversii)).